A 222-amino-acid polypeptide reads, in one-letter code: Protein DEHYDRATION-INDUCED 19 homolog 6 (222 aa).

Phosphoserine is present on serine 116.

It belongs to the Di19 family. Phosphorylated in vitro by CPK3 or CPK11. Expressed in seedlings, roots, leaves, stems, flowers and siliques.

It localises to the nucleus. The polypeptide is Protein DEHYDRATION-INDUCED 19 homolog 6 (DI19-6) (Arabidopsis thaliana (Mouse-ear cress)).